The sequence spans 345 residues: uncharacterized protein (345 aa).

The protein resides in the cell membrane. Its function is as follows. Involved in potassium and divalent cation transport. Enhances the transport activity of the cation/potassium transporter CzcD. This is an uncharacterized protein from Bacillus velezensis (strain DSM 23117 / BGSC 10A6 / LMG 26770 / FZB42) (Bacillus amyloliquefaciens subsp. plantarum).